A 458-amino-acid chain; its full sequence is Alpha-2C adrenergic receptor (458 aa).

Topologically, residues 1-51 (MASPALAAALAAAAAEGPNGSDAGEWGSGGGANASGTDWVPPPGQYSAGAV) are extracellular. N-linked (GlcNAc...) asparagine glycosylation is found at Asn-19 and Asn-33. A helical membrane pass occupies residues 52–76 (AGLAAVVGFLIVFTVVGNVLVVIAV). Residues 77–88 (LTSRALRAPQNL) lie on the Cytoplasmic side of the membrane. A helical membrane pass occupies residues 89–114 (FLVSLASADILVATLVMPFSLANELM). At 115–124 (AYWYFGQVWC) the chain is on the extracellular side. The cysteines at positions 124 and 202 are disulfide-linked. The helical transmembrane segment at 125–147 (GVYLALDVLFCTSSIVHLCAISL) threads the bilayer. The Cytoplasmic portion of the chain corresponds to 148–168 (DRYWSVTQAVEYNLKRTPRRV). The chain crosses the membrane as a helical span at residues 169-191 (KATIVAVWLISAVISFPPLVSFY). The Extracellular segment spans residues 192 to 207 (RRPDGAAYPQCGLNDE). A helical transmembrane segment spans residues 208–231 (TWYILSSCIGSFFAPCLIMGLVYA). Over 232-379 (RIYRVAKLRT…QAREKRFTFV (148 aa)) the chain is Cytoplasmic. Positions 245–343 (SEKRGPAGPD…SPGPGGRLSR (99 aa)) are disordered. Over residues 291 to 303 (RRRRRGALRRGGR) the composition is skewed to basic residues. The helical transmembrane segment at 380 to 403 (LAVVMGVFVLCWFPFFFSYSLYGI) threads the bilayer. Topologically, residues 404–416 (CREACQLPEPLFK) are extracellular. A helical membrane pass occupies residues 417–437 (FFFWIGYCNSSLNPVIYTVFN). At 438–458 (QDFRRSFKHILFRRRRRGFRQ) the chain is on the cytoplasmic side.

This sequence belongs to the G-protein coupled receptor 1 family. Adrenergic receptor subfamily. ADRA2C sub-subfamily.

The protein localises to the cell membrane. In terms of biological role, alpha-2 adrenergic receptors mediate the catecholamine-induced inhibition of adenylate cyclase through the action of G proteins. In Mus musculus (Mouse), this protein is Alpha-2C adrenergic receptor (Adra2c).